Reading from the N-terminus, the 299-residue chain is ATP phosphoribosyltransferase (299 aa).

This sequence belongs to the ATP phosphoribosyltransferase family. Long subfamily. In terms of assembly, equilibrium between an active dimeric form, an inactive hexameric form and higher aggregates. Interconversion between the various forms is largely reversible and is influenced by the natural substrates and inhibitors of the enzyme. The cofactor is Mg(2+).

The protein localises to the cytoplasm. The catalysed reaction is 1-(5-phospho-beta-D-ribosyl)-ATP + diphosphate = 5-phospho-alpha-D-ribose 1-diphosphate + ATP. It participates in amino-acid biosynthesis; L-histidine biosynthesis; L-histidine from 5-phospho-alpha-D-ribose 1-diphosphate: step 1/9. With respect to regulation, feedback inhibited by histidine. Functionally, catalyzes the condensation of ATP and 5-phosphoribose 1-diphosphate to form N'-(5'-phosphoribosyl)-ATP (PR-ATP). Has a crucial role in the pathway because the rate of histidine biosynthesis seems to be controlled primarily by regulation of HisG enzymatic activity. In Buchnera aphidicola subsp. Diuraphis noxia, this protein is ATP phosphoribosyltransferase.